The chain runs to 351 residues: Thiamine-phosphate synthase (351 aa).

Residues 1-128 (MLNSNTKDHE…SKIASEIRYE (128 aa)) are unknown. Residues 129–351 (IYTVEIDLLS…MILKELSHEN (223 aa)) form a thiamine-phosphate synthase region. 4-amino-2-methyl-5-(diphosphooxymethyl)pyrimidine-binding positions include 180-184 (QHRFK) and asparagine 212. Aspartate 213 and aspartate 232 together coordinate Mg(2+). Serine 251 lines the 4-amino-2-methyl-5-(diphosphooxymethyl)pyrimidine pocket. Residue 277 to 279 (TTT) coordinates 2-[(2R,5Z)-2-carboxy-4-methylthiazol-5(2H)-ylidene]ethyl phosphate. Residue lysine 280 coordinates 4-amino-2-methyl-5-(diphosphooxymethyl)pyrimidine. Glycine 307 is a 2-[(2R,5Z)-2-carboxy-4-methylthiazol-5(2H)-ylidene]ethyl phosphate binding site.

This sequence belongs to the thiamine-phosphate synthase family. Requires Mg(2+) as cofactor.

The catalysed reaction is 2-[(2R,5Z)-2-carboxy-4-methylthiazol-5(2H)-ylidene]ethyl phosphate + 4-amino-2-methyl-5-(diphosphooxymethyl)pyrimidine + 2 H(+) = thiamine phosphate + CO2 + diphosphate. The enzyme catalyses 2-(2-carboxy-4-methylthiazol-5-yl)ethyl phosphate + 4-amino-2-methyl-5-(diphosphooxymethyl)pyrimidine + 2 H(+) = thiamine phosphate + CO2 + diphosphate. It carries out the reaction 4-methyl-5-(2-phosphooxyethyl)-thiazole + 4-amino-2-methyl-5-(diphosphooxymethyl)pyrimidine + H(+) = thiamine phosphate + diphosphate. Its pathway is cofactor biosynthesis; thiamine diphosphate biosynthesis; thiamine phosphate from 4-amino-2-methyl-5-diphosphomethylpyrimidine and 4-methyl-5-(2-phosphoethyl)-thiazole: step 1/1. In terms of biological role, condenses 4-methyl-5-(beta-hydroxyethyl)thiazole monophosphate (THZ-P) and 2-methyl-4-amino-5-hydroxymethyl pyrimidine pyrophosphate (HMP-PP) to form thiamine monophosphate (TMP). In Prochlorococcus marinus (strain AS9601), this protein is Thiamine-phosphate synthase.